The chain runs to 463 residues: Annexin A7 (463 aa).

Pro residues-rich tracts occupy residues 1–18 (MSYP…PGYP) and 26–38 (FPPP…PSGF). 2 disordered regions span residues 1 to 54 (MSYP…SSGY) and 71 to 153 (GYPG…THGT). The segment at 1–140 (MSYPGYPPTG…QYPGGQSPYP (140 aa)) is repeat-rich region. The segment at 5-20 (GYPPTGYPPFPGYPPT) is 3 X 5 AA tandem repeats of G-Y-P-P-X. A compositionally biased stretch (gly residues) spans 86–99 (GGQGFGAPPGGAGF). Annexin repeat units follow at residues 160 to 231 (FDAM…ALFM), 232 to 303 (PSTY…SMCQ), 315 to 387 (QLAQ…TILQ), and 391 to 462 (NRPA…AIVG). Residue lysine 208 is modified to N6-acetyllysine.

Belongs to the annexin family. In terms of assembly, interacts with PDCD6.

In terms of biological role, calcium/phospholipid-binding protein which promotes membrane fusion and is involved in exocytosis. This chain is Annexin A7 (ANXA7), found in Bos taurus (Bovine).